The sequence spans 430 residues: DNA polymerase IV 1 (430 aa).

The UmuC domain maps to 45-225; that stretch reads LAHIDCDAFY…KPVTLIWGVG (181 aa). Residues Asp49 and Asp142 each coordinate Mg(2+). Residue Glu143 is part of the active site.

This sequence belongs to the DNA polymerase type-Y family. In terms of assembly, monomer. Mg(2+) serves as cofactor.

The protein resides in the cytoplasm. It carries out the reaction DNA(n) + a 2'-deoxyribonucleoside 5'-triphosphate = DNA(n+1) + diphosphate. Poorly processive, error-prone DNA polymerase involved in untargeted mutagenesis. Copies undamaged DNA at stalled replication forks, which arise in vivo from mismatched or misaligned primer ends. These misaligned primers can be extended by PolIV. Exhibits no 3'-5' exonuclease (proofreading) activity. May be involved in translesional synthesis, in conjunction with the beta clamp from PolIII. The sequence is that of DNA polymerase IV 1 (dinB1) from Rhizobium meliloti (strain 1021) (Ensifer meliloti).